Consider the following 91-residue polypeptide: Small ribosomal subunit protein uS15 (91 aa).

It belongs to the universal ribosomal protein uS15 family. As to quaternary structure, part of the 30S ribosomal subunit. Forms a bridge to the 50S subunit in the 70S ribosome, contacting the 23S rRNA.

One of the primary rRNA binding proteins, it binds directly to 16S rRNA where it helps nucleate assembly of the platform of the 30S subunit by binding and bridging several RNA helices of the 16S rRNA. Its function is as follows. Forms an intersubunit bridge (bridge B4) with the 23S rRNA of the 50S subunit in the ribosome. The polypeptide is Small ribosomal subunit protein uS15 (Rickettsia canadensis (strain McKiel)).